The primary structure comprises 118 residues: Putative membrane protein insertion efficiency factor (118 aa).

A disordered region spans residues 76 to 118; that stretch reads WDPVPQRRPRRRDAAAADAAMSAPHACKGSPHAVVGDTNDGST. The span at 91-101 shows a compositional bias: low complexity; the sequence is AADAAMSAPHA.

It belongs to the UPF0161 family.

It is found in the cell membrane. Functionally, could be involved in insertion of integral membrane proteins into the membrane. The chain is Putative membrane protein insertion efficiency factor from Nocardia farcinica (strain IFM 10152).